Here is an 867-residue protein sequence, read N- to C-terminus: E3 ubiquitin-protein ligase SH3RF1 (867 aa).

The segment at 12–53 (CPVCLERLDATAKVLPCQHTFCRRCLLGIVGSRGELRCPECR) adopts an RING-type zinc-finger fold. Positions 101 to 127 (AQGAGGSQRDPGPTGGQSQRVQAKSTP) are disordered. Residues 116–125 (GQSQRVQAKS) are compositionally biased toward polar residues. SH3 domains follow at residues 132–191 (PQLP…VIKP) and 194–257 (QPPP…FNSA). The disordered stretch occupies residues 265–328 (DKPSEGGGDS…PPPQRHSMEI (64 aa)). Low complexity predominate over residues 275–285 (SEGPSSSSSGP). The region spanning 436–497 (QRPTVYVAMF…PGNYMSPVSR (62 aa)) is the SH3 3 domain. Residues 706-794 (LSNKKKLRPS…APIAPPPRQP (89 aa)) are disordered. The segment covering 760–769 (SELSMSSSSS) has biased composition (low complexity). A compositionally biased stretch (polar residues) spans 770–784 (NTDAVTHRSSPQDNT). The SH3 4 domain maps to 808 to 867 (IVCERYRVVVSYPPQSEAELELKEGDIVFVHKKREDGWFKGTLQRNGRTGLFPGSFVDSI).

The protein belongs to the SH3RF family. Post-translationally, autoubiquitinated. Ubiquitinated by SH3RF2, leading to proteasome-mediated degradation.

Its subcellular location is the cytoplasm. The protein resides in the perinuclear region. It is found in the cell projection. The protein localises to the lamellipodium. It localises to the golgi apparatus. Its subcellular location is the trans-Golgi network. The enzyme catalyses S-ubiquitinyl-[E2 ubiquitin-conjugating enzyme]-L-cysteine + [acceptor protein]-L-lysine = [E2 ubiquitin-conjugating enzyme]-L-cysteine + N(6)-ubiquitinyl-[acceptor protein]-L-lysine.. It functions in the pathway protein modification; protein ubiquitination. In terms of biological role, has E3 ubiquitin-protein ligase activity. In the absence of an external substrate, it can catalyze self-ubiquitination. Acts as a scaffold protein that contributes to the effective activation of the JNK signaling pathway. This chain is E3 ubiquitin-protein ligase SH3RF1 (sh3rf1), found in Danio rerio (Zebrafish).